A 1507-amino-acid chain; its full sequence is Protein TIC 214 (1507 aa).

6 helical membrane passes run 4–24 (IYLV…LPIG), 53–73 (TILL…VLAL), 81–101 (LWVK…IYLY), 129–149 (AFLE…NPVF), 163–183 (ISTF…IFFL), and 202–222 (LVKI…SFLC).

Belongs to the TIC214 family. In terms of assembly, part of the Tic complex.

It localises to the plastid. It is found in the chloroplast inner membrane. Functionally, involved in protein precursor import into chloroplasts. May be part of an intermediate translocation complex acting as a protein-conducting channel at the inner envelope. The sequence is that of Protein TIC 214 from Staurastrum punctulatum (Green alga).